A 128-amino-acid polypeptide reads, in one-letter code: Small ribosomal subunit protein bS6 (128 aa).

Positions 105-128 (AKVTEEEPVEAAPEAKVETTTEEE) are disordered. A compositionally biased stretch (basic and acidic residues) spans 117–128 (PEAKVETTTEEE).

Belongs to the bacterial ribosomal protein bS6 family.

Functionally, binds together with bS18 to 16S ribosomal RNA. This is Small ribosomal subunit protein bS6 from Geotalea daltonii (strain DSM 22248 / JCM 15807 / FRC-32) (Geobacter daltonii).